Consider the following 364-residue polypeptide: DNA replication and repair protein RecF (364 aa).

Position 30–37 (30–37 (GLNAQGKS)) interacts with ATP.

This sequence belongs to the RecF family.

The protein resides in the cytoplasm. In terms of biological role, the RecF protein is involved in DNA metabolism; it is required for DNA replication and normal SOS inducibility. RecF binds preferentially to single-stranded, linear DNA. It also seems to bind ATP. In Caldanaerobacter subterraneus subsp. tengcongensis (strain DSM 15242 / JCM 11007 / NBRC 100824 / MB4) (Thermoanaerobacter tengcongensis), this protein is DNA replication and repair protein RecF.